The sequence spans 261 residues: Transmembrane and immunoglobulin domain-containing protein 1 (261 aa).

The first 26 residues, 1-26, serve as a signal peptide directing secretion; it reads MVWKITGPLQACQLLLVVLSLPQGRT. The 87-residue stretch at 27–113 folds into the Ig-like C2-type 1 domain; that stretch reads SSVLTVNGRT…LQRDQTVSVT (87 aa). Topologically, residues 27–215 are extracellular; that stretch reads SSVLTVNGRT…DFHLLVKDKV (189 aa). The cysteines at positions 53 and 102 are disulfide-linked. Asparagine 57, asparagine 82, asparagine 92, asparagine 117, asparagine 157, and asparagine 189 each carry an N-linked (GlcNAc...) asparagine glycan. An Ig-like C2-type 2 domain is found at 121-206; it reads PPLLSGNGFQ…SSSLKMETMD (86 aa). Residues cysteine 142 and cysteine 194 are joined by a disulfide bond. A helical membrane pass occupies residues 216–236; sequence FVMPAEPIIAACVVVVLTMAF. Residues 237 to 261 lie on the Cytoplasmic side of the membrane; that stretch reads ALFSRRKRIMKLCGKKNDPNSETAL.

Homodimer. In terms of processing, N-glycosylated.

The protein localises to the cell membrane. Its subcellular location is the cytoplasm. Functionally, may control cell-cell adhesion, cell migration and proliferation, cell morphology, and protects renal epithelial cells from oxidative cell injury to promote cell survival. In Mus musculus (Mouse), this protein is Transmembrane and immunoglobulin domain-containing protein 1.